Here is a 161-residue protein sequence, read N- to C-terminus: Ribonuclease H (161 aa).

Residues 5 to 149 form the RNase H type-1 domain; sequence EKLAIAAATD…VDAIAVAFSK (145 aa). The Mg(2+) site is built by Asp14, Glu53, Asp78, and Asp141.

Belongs to the RNase H family. As to quaternary structure, monomer. Mg(2+) is required as a cofactor.

The protein localises to the cytoplasm. It catalyses the reaction Endonucleolytic cleavage to 5'-phosphomonoester.. Endonuclease that specifically degrades the RNA of RNA-DNA hybrids. This Prochlorococcus marinus (strain NATL1A) protein is Ribonuclease H.